A 252-amino-acid chain; its full sequence is Small ribosomal subunit protein uS2 (252 aa).

It belongs to the universal ribosomal protein uS2 family.

The protein is Small ribosomal subunit protein uS2 of Chlorobium phaeobacteroides (strain DSM 266 / SMG 266 / 2430).